The primary structure comprises 260 residues: MLGIRVIPCLDVTDGRVVKGTNFVNLKDAGDPVEVAKQYNSDGADELVFLDITATHERRDTTVDLVRRTAEKVFIPLTVGGGIRTTEDIRNLLNAGADKVSLNSSAVKDPSIIKKASDKFGIQCIVVAIDAKKTGEHKWNVFVHGGRIDTGIDAVLWAKKAAAFGAGEILLTSMDKDGTKDGYDSELLKAISSSVVIPVIASGGAGKVEHFSKACEYGASAVLAASLFHYKELTIKEVKEHLKSKNIPVRQIRAEFAINN.

Active-site residues include D11 and D130.

The protein belongs to the HisA/HisF family. In terms of assembly, heterodimer of HisH and HisF.

Its subcellular location is the cytoplasm. The enzyme catalyses 5-[(5-phospho-1-deoxy-D-ribulos-1-ylimino)methylamino]-1-(5-phospho-beta-D-ribosyl)imidazole-4-carboxamide + L-glutamine = D-erythro-1-(imidazol-4-yl)glycerol 3-phosphate + 5-amino-1-(5-phospho-beta-D-ribosyl)imidazole-4-carboxamide + L-glutamate + H(+). The protein operates within amino-acid biosynthesis; L-histidine biosynthesis; L-histidine from 5-phospho-alpha-D-ribose 1-diphosphate: step 5/9. Its function is as follows. IGPS catalyzes the conversion of PRFAR and glutamine to IGP, AICAR and glutamate. The HisF subunit catalyzes the cyclization activity that produces IGP and AICAR from PRFAR using the ammonia provided by the HisH subunit. The polypeptide is Imidazole glycerol phosphate synthase subunit HisF (Endomicrobium trichonymphae).